Here is a 276-residue protein sequence, read N- to C-terminus: CDP-diacylglycerol--serine O-phosphatidyltransferase (276 aa).

Residues Met1–Ile21 form a disordered region. A phosphoserine mark is found at Ser4, Ser34, Ser42, Ser46, Ser47, and Ser50. A run of 4 helical transmembrane segments spans residues Met82–Leu102, Ile163–Leu183, Tyr210–Val230, and Gln248–Ser268.

It belongs to the CDP-alcohol phosphatidyltransferase class-I family. Mn(2+) serves as cofactor. Mg(2+) is required as a cofactor.

It localises to the microsome membrane. Its subcellular location is the endoplasmic reticulum membrane. The protein resides in the mitochondrion outer membrane. The enzyme catalyses a CDP-1,2-diacyl-sn-glycerol + L-serine = a 1,2-diacyl-sn-glycero-3-phospho-L-serine + CMP + H(+). It functions in the pathway phospholipid metabolism; phosphatidylethanolamine biosynthesis; phosphatidylethanolamine from CDP-diacylglycerol: step 1/2. In terms of biological role, catalyzes the synthesis of phosphatidylserine (PtdSer). The chain is CDP-diacylglycerol--serine O-phosphatidyltransferase (CHO1) from Saccharomyces cerevisiae (strain ATCC 204508 / S288c) (Baker's yeast).